Here is a 1154-residue protein sequence, read N- to C-terminus: Serine-aspartate repeat-containing protein E (1154 aa).

Residues 1 to 52 form the signal peptide; it reads MINRDNKKAITKKGMISNRLNKFSIRKYTVGTASILVGTTLIFGLGNQEAKA. Positions 23-34 match the YSIRK-G/S signaling motif motif; the sequence is FSIRKYTVGTAS. A ligand binding A region region spans residues 53–606; sequence AENTSTENAK…GDGTVKPEEK (554 aa). The disordered stretch occupies residues 54-230; the sequence is ENTSTENAKQ…SKEELKNNPE (177 aa). Residues 61–75 show a composition bias toward basic and acidic residues; sequence AKQDDATTSDNKEVV. Residues 77–90 are compositionally biased toward low complexity; it reads ETENNSTTENNSTN. Positions 92–108 are enriched in basic and acidic residues; it reads IKKETNTDSQPEAKKES. The span at 118–129 shows a compositional bias: polar residues; the sequence is NNVTATTETKPQ. A compositionally biased stretch (basic and acidic residues) spans 130–145; that stretch reads NIEKENVKPSTDKTAT. Residues 166–178 show a composition bias toward low complexity; sequence TTKPSTSEPSTSE. The segment covering 179 to 212 has biased composition (polar residues); sequence IQTKPTTPQESTNIENSQPQPTPSKVDNQVTDAT. Over residues 221–230 the composition is skewed to basic and acidic residues; it reads SKEELKNNPE. 3 consecutive CNA-B domains span residues 607–719, 720–829, and 830–940; these read LYKI…YKEP, KYNL…YKTP, and KYSL…EEDT. The interval 904–1129 is disordered; sequence VTNTTEDDKD…TGSENNGSNN (226 aa). 2 stretches are compositionally biased toward acidic residues: residues 908–918 and 935–1093; these read TEDDKDADGGE and YFEE…DSDS. Residues 1117–1121 carry the LPXTG sorting signal motif; sequence LPETG. Thr1120 is modified (pentaglycyl murein peptidoglycan amidated threonine). Positions 1121 to 1154 are cleaved as a propeptide — removed by sortase; that stretch reads GSENNGSNNATLFGGLFAALGSLLLFGRRKKQNK.

This sequence belongs to the serine-aspartate repeat-containing protein (SDr) family. Interacts with host complement factor H/CFAH (via C-terminus). Interacts with host complement regulator C4BPA.

It is found in the secreted. Its subcellular location is the cell wall. Its function is as follows. Cell surface-associated calcium-binding protein which plays an important role in adhesion and pathogenesis. Contributes to the resistance to killing by innate immune components in blood and thus attenuates bacterial clearance by interacting with host complement factor H/CFAH and modulating its activity. Also inhibits bacterial opsonization and killing by interacting with host complement regulator C4BPA and thus inhibiting classical complement pathway activation. The polypeptide is Serine-aspartate repeat-containing protein E (sdrE) (Staphylococcus aureus (strain USA300)).